A 59-amino-acid chain; its full sequence is Small integral membrane protein 30 (59 aa).

An N-terminal signal peptide occupies residues 1-24; that stretch reads MNSVSTQLILVLASLLLILPVVEA. The Extracellular segment spans residues 25-29; the sequence is VEAGD. A helical membrane pass occupies residues 30–50; the sequence is AIALLLGVVLSITGICACLGI. Residues 51 to 59 lie on the Cytoplasmic side of the membrane; that stretch reads YARKRNGQM.

In terms of assembly, interacts (via transmembrane domain) with antiviral protein MAVS (via transmembrane domain); the interaction disrupts MAVS interaction with RIGI and inhibits MAVS aggregation, resulting in the repression of type I interferon signaling and innate immune responses.

It is found in the endoplasmic reticulum membrane. The protein localises to the mitochondrion membrane. Its function is as follows. Negatively regulates antiviral innate immune responses. Disrupts the interaction of antiviral protein MAVS with innate immune receptor RIGI and inhibits MAVS aggregation, resulting in the repression of type I interferon signaling and innate immune responses. In Mus musculus (Mouse), this protein is Small integral membrane protein 30.